A 255-amino-acid chain; its full sequence is Type III pantothenate kinase (255 aa).

7–14 (DVGNTRLK) contributes to the ATP binding site. Residues Y96 and 103–106 (GADR) each bind substrate. D105 (proton acceptor) is an active-site residue. T133 contacts ATP. T183 serves as a coordination point for substrate.

Belongs to the type III pantothenate kinase family. Homodimer. NH4(+) serves as cofactor. Requires K(+) as cofactor.

It localises to the cytoplasm. It carries out the reaction (R)-pantothenate + ATP = (R)-4'-phosphopantothenate + ADP + H(+). It participates in cofactor biosynthesis; coenzyme A biosynthesis; CoA from (R)-pantothenate: step 1/5. In terms of biological role, catalyzes the phosphorylation of pantothenate (Pan), the first step in CoA biosynthesis. In Polaromonas sp. (strain JS666 / ATCC BAA-500), this protein is Type III pantothenate kinase.